A 269-amino-acid chain; its full sequence is Formamidopyrimidine-DNA glycosylase (269 aa).

P2 functions as the Schiff-base intermediate with DNA in the catalytic mechanism. Residue E3 is the Proton donor of the active site. Catalysis depends on K57, which acts as the Proton donor; for beta-elimination activity. Positions 90, 109, and 150 each coordinate DNA. The FPG-type zinc finger occupies 235–269; that stretch reads QVYGRKGEPCRVCGTPIVATKHAQRATFYCRQCQK. The active-site Proton donor; for delta-elimination activity is R259.

Belongs to the FPG family. As to quaternary structure, monomer. It depends on Zn(2+) as a cofactor.

It carries out the reaction Hydrolysis of DNA containing ring-opened 7-methylguanine residues, releasing 2,6-diamino-4-hydroxy-5-(N-methyl)formamidopyrimidine.. The enzyme catalyses 2'-deoxyribonucleotide-(2'-deoxyribose 5'-phosphate)-2'-deoxyribonucleotide-DNA = a 3'-end 2'-deoxyribonucleotide-(2,3-dehydro-2,3-deoxyribose 5'-phosphate)-DNA + a 5'-end 5'-phospho-2'-deoxyribonucleoside-DNA + H(+). Its function is as follows. Involved in base excision repair of DNA damaged by oxidation or by mutagenic agents. Acts as a DNA glycosylase that recognizes and removes damaged bases. Has a preference for oxidized purines, such as 7,8-dihydro-8-oxoguanine (8-oxoG). Has AP (apurinic/apyrimidinic) lyase activity and introduces nicks in the DNA strand. Cleaves the DNA backbone by beta-delta elimination to generate a single-strand break at the site of the removed base with both 3'- and 5'-phosphates. The sequence is that of Formamidopyrimidine-DNA glycosylase from Escherichia coli O6:H1 (strain CFT073 / ATCC 700928 / UPEC).